The primary structure comprises 366 residues: MTPTTTPVSNPDALSTGTQDVHTLKGTLQRLAPGTPLRDGLDRIVRGHTGALIVIGDDENVSSICDGGFEFDVSFAATRLRELCKMDGAVILSSDLERIKRANVQLLPSPTWPTQESGTRHRSAERTALHTGVPVIAVSESQNTITLYVEGKSHMLEQPAALLNRANQALGTMERYRDRLDQVNNRLHLAELHSYVTVIDVVSVIQREEMLRRVGEIIDGDVLELGKDAKEIQIQLSELRGDNDRERESIIADYLVTDGIPADEEIHAALEAISHLDDKALLNPANIARVLGLPPTEEALDEPVTPRGYRTLNRIPRVQKFLMDKLIVEFGNLDALLNASVEDLSAVDGVGSLWARHITDGLGRLS.

Residues 21-159 form the DAC domain; sequence VHTLKGTLQR…EGKSHMLEQP (139 aa). Residues glycine 88, leucine 106, and 119–123 contribute to the ATP site; that span reads TRHRS.

It belongs to the DisA family. As to quaternary structure, homooctamer. Mg(2+) is required as a cofactor.

It catalyses the reaction 2 ATP = 3',3'-c-di-AMP + 2 diphosphate. In terms of biological role, participates in a DNA-damage check-point. DisA forms globular foci that rapidly scan along the chromosomes searching for lesions. Also has diadenylate cyclase activity, catalyzing the condensation of 2 ATP molecules into cyclic di-AMP (c-di-AMP). c-di-AMP likely acts as a signaling molecule that may couple DNA integrity with a cellular process. The sequence is that of DNA integrity scanning protein DisA from Corynebacterium glutamicum (strain ATCC 13032 / DSM 20300 / JCM 1318 / BCRC 11384 / CCUG 27702 / LMG 3730 / NBRC 12168 / NCIMB 10025 / NRRL B-2784 / 534).